A 174-amino-acid polypeptide reads, in one-letter code: Late lactation protein B (174 aa).

Residues 1–18 (MKVLFLTIALSLFSILQA) form the signal peptide. A disulfide bond links Cys77 and Cys169.

The protein belongs to the calycin superfamily. Lipocalin family. Mammary gland specific. Secreted in milk.

It is found in the secreted. Functionally, probably serves a role in the transport of a small ligand released during the hydrolysis of milk fat. In Notamacropus eugenii (Tammar wallaby), this protein is Late lactation protein B (LLPB).